An 876-amino-acid polypeptide reads, in one-letter code: Leucine--tRNA ligase (876 aa).

The short motif at proline 42 to histidine 52 is the 'HIGH' region element. Positions lysine 634 to serine 638 match the 'KMSKS' region motif. Lysine 637 is an ATP binding site.

Belongs to the class-I aminoacyl-tRNA synthetase family.

It localises to the cytoplasm. The catalysed reaction is tRNA(Leu) + L-leucine + ATP = L-leucyl-tRNA(Leu) + AMP + diphosphate. The protein is Leucine--tRNA ligase of Neisseria meningitidis serogroup C / serotype 2a (strain ATCC 700532 / DSM 15464 / FAM18).